The sequence spans 372 residues: 4-hydroxy-3-methylbut-2-en-1-yl diphosphate synthase (flavodoxin) (372 aa).

Cysteine 270, cysteine 273, cysteine 305, and glutamate 312 together coordinate [4Fe-4S] cluster.

This sequence belongs to the IspG family. It depends on [4Fe-4S] cluster as a cofactor.

It catalyses the reaction (2E)-4-hydroxy-3-methylbut-2-enyl diphosphate + oxidized [flavodoxin] + H2O + 2 H(+) = 2-C-methyl-D-erythritol 2,4-cyclic diphosphate + reduced [flavodoxin]. Its pathway is isoprenoid biosynthesis; isopentenyl diphosphate biosynthesis via DXP pathway; isopentenyl diphosphate from 1-deoxy-D-xylulose 5-phosphate: step 5/6. Converts 2C-methyl-D-erythritol 2,4-cyclodiphosphate (ME-2,4cPP) into 1-hydroxy-2-methyl-2-(E)-butenyl 4-diphosphate. The polypeptide is 4-hydroxy-3-methylbut-2-en-1-yl diphosphate synthase (flavodoxin) (Escherichia coli (strain SMS-3-5 / SECEC)).